Reading from the N-terminus, the 658-residue chain is DNA-binding protein Rfx5 (658 aa).

Basic and acidic residues predominate over residues 1 to 10 (MAEDKPDAKS). The tract at residues 1–28 (MAEDKPDAKSPKTGARPQGGADAGEPTT) is disordered. Ala-2 carries the N-acetylalanine modification. Ser-10 is subject to Phosphoserine. The N-terminal domain stretch occupies residues 24–89 (GEPTTLLQRL…PSLLSNEEYM (66 aa)). Residues 61 to 65 (LYLYL) form a leucine-rich region; critical for dimer formation and for interaction with RFXAP region. The RFX-type winged-helix DNA-binding region spans 91–167 (AYRWIRNHLE…YCYSGIRRKT (77 aa)). Residues 172–177 (PPLPGL) carry the PxLPxI/L motif; mediates interaction with RFXANK motif. Ser-184 bears the Phosphoserine mark. Disordered regions lie at residues 250–315 (LAEE…SSVP), 382–422 (AGPG…GLGA), 443–602 (VPPR…DKIP), and 624–658 (KGEADAATQGNKGLKGRVLQSSLTPEHKDPKATPP). A compositionally biased stretch (basic and acidic residues) spans 277–309 (GPKKPERPAQPPKEQEARAGTDLPGRAERKKSV). Gly residues-rich tracts occupy residues 382 to 398 (AGPGPGPGLGPRFGPGP) and 406 to 422 (PGLGAGLGPGLGPGLGA). 2 stretches are compositionally biased toward basic and acidic residues: residues 465–476 (PRPHDKGIKRTA) and 489–498 (PVKEMKHETQ). A compositionally biased stretch (basic residues) spans 506-516 (KRKRGRPRKKP). Positions 648–658 (PEHKDPKATPP) are enriched in basic and acidic residues.

Belongs to the RFX family. Homodimer. The RFX heterotetrameric complex consists of 2 molecules of RFX5 and one each of RFXAP and RFX-B/RFXANK; with each subunit representing a separate complementation group. Interacts (via PxLPxI/L motif) with RFXANK (via ankyrin repeats); the interaction is direct. RFX forms cooperative DNA binding complexes with X2BP and CBF/NF-Y. RFX associates with CIITA to form an active transcriptional complex. Phosphorylated.

It is found in the nucleus. Its function is as follows. Activates transcription from class II MHC promoters. Recognizes X-boxes. Mediates cooperative binding between RFX and NF-Y. RFX binds the X1 box of MHC-II promoters. This Mus musculus (Mouse) protein is DNA-binding protein Rfx5 (Rfx5).